The primary structure comprises 85 residues: uncharacterized protein (85 aa).

This is an uncharacterized protein from Shigella flexneri.